Here is an 84-residue protein sequence, read N- to C-terminus: Small ribosomal subunit protein eS27 (84 aa).

The segment covering 1 to 16 (MPLAKDLLHPSPEEEK) has biased composition (basic and acidic residues). Residues 1–23 (MPLAKDLLHPSPEEEKRKHKKKR) are disordered. Ser-11 carries the phosphoserine modification. The C4-type zinc finger occupies 38 to 60 (PGCYKITTVFSHAQTVVLCVGCS).

This sequence belongs to the eukaryotic ribosomal protein eS27 family. As to quaternary structure, component of the small ribosomal subunit. Part of the small subunit (SSU) processome, composed of more than 70 proteins and the RNA chaperone small nucleolar RNA (snoRNA) U3. Zn(2+) serves as cofactor.

It is found in the cytoplasm. It localises to the nucleus. Its subcellular location is the nucleolus. Functionally, component of the small ribosomal subunit. The ribosome is a large ribonucleoprotein complex responsible for the synthesis of proteins in the cell. Required for proper rRNA processing and maturation of 18S rRNAs. Part of the small subunit (SSU) processome, first precursor of the small eukaryotic ribosomal subunit. During the assembly of the SSU processome in the nucleolus, many ribosome biogenesis factors, an RNA chaperone and ribosomal proteins associate with the nascent pre-rRNA and work in concert to generate RNA folding, modifications, rearrangements and cleavage as well as targeted degradation of pre-ribosomal RNA by the RNA exosome. This chain is Small ribosomal subunit protein eS27, found in Mus musculus (Mouse).